A 548-amino-acid polypeptide reads, in one-letter code: Chaperonin GroEL (548 aa).

ATP-binding positions include 30–33 (TLGP), Lys-51, 87–91 (DGTTT), Gly-415, 479–481 (NAA), and Asp-495.

This sequence belongs to the chaperonin (HSP60) family. Forms a cylinder of 14 subunits composed of two heptameric rings stacked back-to-back. Interacts with the co-chaperonin GroES.

The protein resides in the cytoplasm. The catalysed reaction is ATP + H2O + a folded polypeptide = ADP + phosphate + an unfolded polypeptide.. Together with its co-chaperonin GroES, plays an essential role in assisting protein folding. The GroEL-GroES system forms a nano-cage that allows encapsulation of the non-native substrate proteins and provides a physical environment optimized to promote and accelerate protein folding. The chain is Chaperonin GroEL from Nitratidesulfovibrio vulgaris (strain DSM 19637 / Miyazaki F) (Desulfovibrio vulgaris).